We begin with the raw amino-acid sequence, 337 residues long: Glycerol-3-phosphate dehydrogenase [NAD(P)+] (337 aa).

NADPH is bound by residues tryptophan 11, arginine 30, and lysine 113. Sn-glycerol 3-phosphate-binding residues include lysine 113, glycine 141, and serine 143. Alanine 145 contacts NADPH. Sn-glycerol 3-phosphate-binding residues include lysine 196, aspartate 249, serine 259, arginine 260, and asparagine 261. Lysine 196 serves as the catalytic Proton acceptor. Residue arginine 260 coordinates NADPH. Valine 284 and glutamate 286 together coordinate NADPH.

It belongs to the NAD-dependent glycerol-3-phosphate dehydrogenase family.

It localises to the cytoplasm. The enzyme catalyses sn-glycerol 3-phosphate + NAD(+) = dihydroxyacetone phosphate + NADH + H(+). The catalysed reaction is sn-glycerol 3-phosphate + NADP(+) = dihydroxyacetone phosphate + NADPH + H(+). It functions in the pathway membrane lipid metabolism; glycerophospholipid metabolism. Its function is as follows. Catalyzes the reduction of the glycolytic intermediate dihydroxyacetone phosphate (DHAP) to sn-glycerol 3-phosphate (G3P), the key precursor for phospholipid synthesis. This Leptothrix cholodnii (strain ATCC 51168 / LMG 8142 / SP-6) (Leptothrix discophora (strain SP-6)) protein is Glycerol-3-phosphate dehydrogenase [NAD(P)+].